We begin with the raw amino-acid sequence, 79 residues long: Small ribosomal subunit protein uS11 (79 aa).

S14 carries the phosphoserine modification. Glycyl lysine isopeptide (Lys-Gly) (interchain with G-Cter in SUMO2) cross-links involve residues K59 and K61.

Belongs to the universal ribosomal protein uS11 family. In terms of assembly, component of the small ribosomal subunit. Part of the small subunit (SSU) processome, composed of more than 70 proteins and the RNA chaperone small nucleolar RNA (snoRNA) U3.

Its subcellular location is the cytoplasm. It is found in the nucleus. The protein resides in the nucleolus. Functionally, component of the small ribosomal subunit. The ribosome is a large ribonucleoprotein complex responsible for the synthesis of proteins in the cell. Part of the small subunit (SSU) processome, first precursor of the small eukaryotic ribosomal subunit. During the assembly of the SSU processome in the nucleolus, many ribosome biogenesis factors, an RNA chaperone and ribosomal proteins associate with the nascent pre-rRNA and work in concert to generate RNA folding, modifications, rearrangements and cleavage as well as targeted degradation of pre-ribosomal RNA by the RNA exosome. This chain is Small ribosomal subunit protein uS11 (RPS14), found in Sus scrofa (Pig).